A 384-amino-acid chain; its full sequence is Glucans biosynthesis protein C (384 aa).

10 consecutive transmembrane segments (helical) span residues 17–37 (AWLM…THSW), 54–74 (FIHA…SYML), 91–111 (VGIP…ILLQ), 140–160 (LWFL…FTWF), 173–193 (AISL…YAAI), 212–232 (FIVM…LAFI), 240–260 (FTTP…AYLL), 274–294 (TESV…FSLG), 311–331 (ASLF…AYIT), and 338–358 (LIGF…LYEI).

Belongs to the acyltransferase 3 family. OpgC subfamily.

The protein localises to the cell membrane. It functions in the pathway glycan metabolism; osmoregulated periplasmic glucan (OPG) biosynthesis. Its function is as follows. Necessary for the succinyl substitution of periplasmic glucans. Could catalyze the transfer of succinyl residues from the cytoplasmic side of the membrane to the nascent glucan backbones on the periplasmic side of the membrane. The sequence is that of Glucans biosynthesis protein C from Salmonella agona (strain SL483).